We begin with the raw amino-acid sequence, 152 residues long: Regulatory protein RecX (152 aa).

It belongs to the RecX family.

Its subcellular location is the cytoplasm. Functionally, modulates RecA activity. This Haemophilus influenzae (strain PittEE) protein is Regulatory protein RecX.